Consider the following 288-residue polypeptide: Acetyl-coenzyme A carboxylase carboxyl transferase subunit beta (288 aa).

The CoA carboxyltransferase N-terminal domain occupies 34 to 288 (LFAKCPGCKQ…TLLSFHGGVQ (255 aa)). Cys38, Cys41, Cys56, and Cys59 together coordinate Zn(2+). The C4-type zinc finger occupies 38 to 59 (CPGCKQAIYQKDLGQAKICPNC).

Belongs to the AccD/PCCB family. Acetyl-CoA carboxylase is a heterohexamer composed of biotin carboxyl carrier protein (AccB), biotin carboxylase (AccC) and two subunits each of ACCase subunit alpha (AccA) and ACCase subunit beta (AccD). Zn(2+) is required as a cofactor.

The protein localises to the cytoplasm. The enzyme catalyses N(6)-carboxybiotinyl-L-lysyl-[protein] + acetyl-CoA = N(6)-biotinyl-L-lysyl-[protein] + malonyl-CoA. Its pathway is lipid metabolism; malonyl-CoA biosynthesis; malonyl-CoA from acetyl-CoA: step 1/1. Functionally, component of the acetyl coenzyme A carboxylase (ACC) complex. Biotin carboxylase (BC) catalyzes the carboxylation of biotin on its carrier protein (BCCP) and then the CO(2) group is transferred by the transcarboxylase to acetyl-CoA to form malonyl-CoA. This is Acetyl-coenzyme A carboxylase carboxyl transferase subunit beta from Streptococcus thermophilus (strain ATCC BAA-491 / LMD-9).